Consider the following 392-residue polypeptide: Bifunctional enzyme Fae/Hps (392 aa).

A formaldehyde-activating enzyme region spans residues 1-161 (MFQIGEALMG…EESNKSTHAI (161 aa)). Catalysis depends on His-17, which acts as the Proton donor. Substrate contacts are provided by Asp-19, Leu-48, Lys-66, Thr-68, and Gln-83. Positions 162 to 392 (MGFKVTRLWD…IDQFRVMTDF (231 aa)) are 3-hexulose-6-phosphate synthase.

This sequence in the N-terminal section; belongs to the formaldehyde-activating enzyme family. The protein in the C-terminal section; belongs to the HPS/KGPDC family. HPS subfamily.

It carries out the reaction 5,6,7,8-tetrahydromethanopterin + formaldehyde = 5,10-methylenetetrahydromethanopterin + H2O. It catalyses the reaction D-ribulose 5-phosphate + formaldehyde = D-arabino-hex-3-ulose 6-phosphate. It participates in carbohydrate biosynthesis; D-ribose 5-phosphate biosynthesis. In terms of biological role, catalyzes the condensation of formaldehyde with tetrahydromethanopterin (H(4)MPT) to 5,10-methylenetetrahydromethanopterin. Catalyzes the reversible formation of ribulose-5-phosphate and formaldehyde from 3-hexulose-6-phosphate. The polypeptide is Bifunctional enzyme Fae/Hps (Methanosarcina barkeri (strain Fusaro / DSM 804)).